The following is a 553-amino-acid chain: CTP synthase (553 aa).

The segment at 1 to 266 (MTKNYIFITG…DNYICEYFKL (266 aa)) is amidoligase domain. S14 contributes to the CTP binding site. Position 14 (S14) interacts with UTP. ATP contacts are provided by residues 15 to 20 (SLGKGI) and D72. Mg(2+) contacts are provided by D72 and E140. CTP-binding positions include 147-149 (DIE), 187-192 (KTKPTQ), and K223. Residues 187 to 192 (KTKPTQ) and K223 contribute to the UTP site. 239-241 (KDV) contributes to the ATP binding site. Residues 291 to 544 (IIGIIGKYIK…IKSAKKNKKN (254 aa)) form the Glutamine amidotransferase type-1 domain. Position 352 (G352) interacts with L-glutamine. Residue C379 is the Nucleophile; for glutamine hydrolysis of the active site. L-glutamine contacts are provided by residues 380–383 (LGMQ), E403, and R472. Catalysis depends on residues H517 and E519.

This sequence belongs to the CTP synthase family. As to quaternary structure, homotetramer.

The enzyme catalyses UTP + L-glutamine + ATP + H2O = CTP + L-glutamate + ADP + phosphate + 2 H(+). It catalyses the reaction L-glutamine + H2O = L-glutamate + NH4(+). It carries out the reaction UTP + NH4(+) + ATP = CTP + ADP + phosphate + 2 H(+). The protein operates within pyrimidine metabolism; CTP biosynthesis via de novo pathway; CTP from UDP: step 2/2. Its activity is regulated as follows. Allosterically activated by GTP, when glutamine is the substrate; GTP has no effect on the reaction when ammonia is the substrate. The allosteric effector GTP functions by stabilizing the protein conformation that binds the tetrahedral intermediate(s) formed during glutamine hydrolysis. Inhibited by the product CTP, via allosteric rather than competitive inhibition. Its function is as follows. Catalyzes the ATP-dependent amination of UTP to CTP with either L-glutamine or ammonia as the source of nitrogen. Regulates intracellular CTP levels through interactions with the four ribonucleotide triphosphates. The protein is CTP synthase of Buchnera aphidicola subsp. Schizaphis graminum (strain Sg).